We begin with the raw amino-acid sequence, 344 residues long: MDENKKRALSAALSQIEKQFGKGSVMRMGDRVIEAVEVIPTGSLMLDIALGIGGLPKGRVVEIYGPESSGKTTLTLQAIAQCQKNGGTAAFIDAEHALDPIYAAKLGVNVDDLLLSQPDTGEQALEIADMLVRSGSVDIVVVDSVAALTPKAEIEGEMGDQLPGLQARLMSQALRKLTGNIKRSNTLVVFINQLRMKIGVMMPGQSPEVTTGGNALKFYASVRLDIRRIGAIKKGDEIIGNQTKIKVVKNKLAPPFKQVVTEILYGEGISREGELIDMGVEAKLVDKAGAWYSYGDERIGQGKDNARTYLRDNPQVATRLEAELREKFQPAEAPREAGDDEDKE.

65-72 (GPESSGKT) is an ATP binding site. A compositionally biased stretch (basic and acidic residues) spans 323–337 (ELREKFQPAEAPREA). Residues 323-344 (ELREKFQPAEAPREAGDDEDKE) are disordered.

The protein belongs to the RecA family.

Its subcellular location is the cytoplasm. Can catalyze the hydrolysis of ATP in the presence of single-stranded DNA, the ATP-dependent uptake of single-stranded DNA by duplex DNA, and the ATP-dependent hybridization of homologous single-stranded DNAs. It interacts with LexA causing its activation and leading to its autocatalytic cleavage. The polypeptide is Protein RecA (Xanthomonas euvesicatoria pv. vesicatoria (strain 85-10) (Xanthomonas campestris pv. vesicatoria)).